The sequence spans 429 residues: MQNYSKSEKAFKEAKKVLPGGVNSPVRAFNSVDASPVFMDHGKGAYITDVDGNEYIDYVLSWGPLILGHADPAVVNAITKAALKGTSFGTPTEIETELAKLVIERVPSIEIVRMVSSGTEATMSAIRLARGYTKREKILKFEGSYHGHGDSLLIKAGSGVATLGLPDSPGVTKGLAADTITVPYNDIEGAELAFQKYGEEIAAVIVEPVAGNMGVVPPIDGFLEGLRELTTKFGSLLIFDEVMTGFRVDYYSAQGYYVVTPDLTCLGKVIGGGLPVGAYGGKKEIMEQIAPAGSIYQAGTLSGNPLAMNAGFETVRQLTPQHYDVFRTLIKRMEEGLTEISARRQVPLSINKAGSMFGFFFTDQKVINFDTAKTSNLEFFRNYYREMLGQGIFLPPSQFEGVFISTMHTEKEIDKTLEAFDTTCKILRG.

Residue K268 is modified to N6-(pyridoxal phosphate)lysine.

This sequence belongs to the class-III pyridoxal-phosphate-dependent aminotransferase family. HemL subfamily. As to quaternary structure, homodimer. Pyridoxal 5'-phosphate serves as cofactor.

Its subcellular location is the cytoplasm. It catalyses the reaction (S)-4-amino-5-oxopentanoate = 5-aminolevulinate. It functions in the pathway porphyrin-containing compound metabolism; protoporphyrin-IX biosynthesis; 5-aminolevulinate from L-glutamyl-tRNA(Glu): step 2/2. The protein is Glutamate-1-semialdehyde 2,1-aminomutase 1 of Listeria monocytogenes serotype 4b (strain F2365).